The primary structure comprises 261 residues: TM2 domain-containing protein 3 (261 aa).

Positions 1–44 (MEAAAEPLRSVRHLSRVLLFLSQCYILSGDGSLNLEHSQPLAQA) are cleaved as a signal peptide. Over 45–193 (IKDPGPTRTF…RTFPKLLYCN (149 aa)) the chain is Extracellular. N-linked (GlcNAc...) asparagine glycosylation is found at N101, N136, N154, N171, N183, and N193. The chain crosses the membrane as a helical span at residues 194–214 (WTGGYKWSTALALSITLGGFG). Positions 197–244 (GYKWSTALALSITLGGFGADRFYLGQWREGLGKLFSFGGLGIWTLIDV) constitute a TM2 domain. Residues 215–229 (ADRFYLGQWREGLGK) lie on the Cytoplasmic side of the membrane. A helical transmembrane segment spans residues 230–250 (LFSFGGLGIWTLIDVLLIGVG). The Extracellular segment spans residues 251-261 (YVGPADGSLYI).

Belongs to the TM2 family.

It is found in the membrane. This Mus musculus (Mouse) protein is TM2 domain-containing protein 3 (Tm2d3).